Reading from the N-terminus, the 922-residue chain is Two-component sensor PprA (922 aa).

A compositionally biased stretch (low complexity) spans 1–10 (MFEFSRSSSA). The interval 1 to 22 (MFEFSRSSSAEAERPEPFSQEG) is disordered. One can recognise a PAC 1 domain in the interval 506-558 (VKTRYRLADGQGNWHWLYDEAKLLRDAQGLPSEAVGLWLDVTEQHLAAQRIAE). Residues 559 to 622 (SEERYRVLVE…EDASALRARL (64 aa)) enclose the PAS domain. Residues 632 to 684 (EVPELRFNLPGQRFLWLVWAERPLFDARGELCEVQAVGRDNTPVRRAQQQLAQ) form the PAC 2 domain. Residues 697–916 (GLAHEVKQPL…LFVVRLPLAA (220 aa)) form the Histidine kinase domain. A Phosphohistidine; by autocatalysis modification is found at His700.

In terms of processing, autophosphorylated.

It carries out the reaction ATP + protein L-histidine = ADP + protein N-phospho-L-histidine.. In terms of biological role, member of the two-component regulatory system PprA/PprB involved in biofilm formation by controlling the expression of many related genes including type IVb pili major subunit flp pilin, adhesin bapA or cupE fimbriae. Functions as a heme sensor histidine kinase which is autophosphorylated at a histidine residue and transfers its phosphate group to PprB. The sequence is that of Two-component sensor PprA from Pseudomonas aeruginosa (strain ATCC 15692 / DSM 22644 / CIP 104116 / JCM 14847 / LMG 12228 / 1C / PRS 101 / PAO1).